The chain runs to 181 residues: Cyclic AMP-dependent transcription factor ATF-3 (181 aa).

Residues 76–96 form a disordered region; that stretch reads VTKSEVAPEEDERKRRRRERN. Lys-78 participates in a covalent cross-link: Glycyl lysine isopeptide (Lys-Gly) (interchain with G-Cter in SUMO2). Residues 86 to 149 enclose the bZIP domain; it reads DERKRRRRER…QHLIYMLNLH (64 aa). The tract at residues 88–110 is basic motif; it reads RKRRRRERNKIAAAKCRNKKKEK. The segment at 114–142 is leucine-zipper; it reads LQKESEKLESVNAELKAQIEELKNEKQHL. Phosphothreonine is present on Thr-162. A Glycyl lysine isopeptide (Lys-Gly) (interchain with G-Cter in SUMO2) cross-link involves residue Lys-175.

This sequence belongs to the bZIP family. ATF subfamily. As to quaternary structure, ATF3 alone can bind DNA, but it preferentially forms heteromeric complexes with JUN and JUNB and does not interact with FOS. As to expression, expressed in tissues containing skeletal muscle or smooth muscle. Expressed in cutaneous and muscular sensory neurons.

The protein resides in the nucleus. Its function is as follows. This protein binds the cAMP response element (CRE) (consensus: 5'-GTGACGT[AC][AG]-3'), a sequence present in many viral and cellular promoters. Represses transcription from promoters with ATF sites. It may repress transcription by stabilizing the binding of inhibitory cofactors at the promoter. This chain is Cyclic AMP-dependent transcription factor ATF-3 (Atf3), found in Rattus norvegicus (Rat).